The following is a 383-amino-acid chain: Lipid-A-disaccharide synthase (383 aa).

Belongs to the LpxB family.

It catalyses the reaction a lipid X + a UDP-2-N,3-O-bis[(3R)-3-hydroxyacyl]-alpha-D-glucosamine = a lipid A disaccharide + UDP + H(+). It functions in the pathway bacterial outer membrane biogenesis; LPS lipid A biosynthesis. Its function is as follows. Condensation of UDP-2,3-diacylglucosamine and 2,3-diacylglucosamine-1-phosphate to form lipid A disaccharide, a precursor of lipid A, a phosphorylated glycolipid that anchors the lipopolysaccharide to the outer membrane of the cell. The protein is Lipid-A-disaccharide synthase of Trichlorobacter lovleyi (strain ATCC BAA-1151 / DSM 17278 / SZ) (Geobacter lovleyi).